The following is a 1210-amino-acid chain: uncharacterized protein (1210 aa).

To E.coli molybdate metabolism regulator (MolR).

This is an uncharacterized protein from Escherichia coli (strain K12).